The primary structure comprises 106 residues: Testis-specific basic protein Y 2 (106 aa).

Belongs to the VCX/VCY family. In terms of assembly, interacts with MAP1S. Interacts with UBE3A (via HECT domain). In terms of tissue distribution, expressed exclusively in testis. Expressed in ejaculated spermatozoa of germ cell. Expressed in the nuclei of spermatogonia, spermatocytes, and round spermatids, except elongated spermatids (at protein level).

This is Testis-specific basic protein Y 2 (BPY2) from Homo sapiens (Human).